We begin with the raw amino-acid sequence, 234 residues long: Orotidine 5'-phosphate decarboxylase (234 aa).

Substrate contacts are provided by residues D14, K36, 63–72, T123, R184, Q193, G213, and R214; that span reads DLKFHDIPNT. The active-site Proton donor is K65.

This sequence belongs to the OMP decarboxylase family. Type 1 subfamily. As to quaternary structure, homodimer.

The enzyme catalyses orotidine 5'-phosphate + H(+) = UMP + CO2. It functions in the pathway pyrimidine metabolism; UMP biosynthesis via de novo pathway; UMP from orotate: step 2/2. Functionally, catalyzes the decarboxylation of orotidine 5'-monophosphate (OMP) to uridine 5'-monophosphate (UMP). The sequence is that of Orotidine 5'-phosphate decarboxylase from Psychromonas ingrahamii (strain DSM 17664 / CCUG 51855 / 37).